A 219-amino-acid chain; its full sequence is Probable nicotinate-nucleotide adenylyltransferase (219 aa).

Belongs to the NadD family.

It catalyses the reaction nicotinate beta-D-ribonucleotide + ATP + H(+) = deamido-NAD(+) + diphosphate. Its pathway is cofactor biosynthesis; NAD(+) biosynthesis; deamido-NAD(+) from nicotinate D-ribonucleotide: step 1/1. Functionally, catalyzes the reversible adenylation of nicotinate mononucleotide (NaMN) to nicotinic acid adenine dinucleotide (NaAD). The protein is Probable nicotinate-nucleotide adenylyltransferase of Enterococcus faecalis (strain ATCC 700802 / V583).